Consider the following 889-residue polypeptide: Disease resistance protein RPS5 (889 aa).

Glycine 2 carries N-myristoyl glycine lipidation. Cysteine 4 carries the S-palmitoyl cysteine lipid modification. Positions 29 to 58 (IHNLSKNLASLQKAMRMLKARQYDVIRRLE) form a coiled coil. The region spanning 140-444 (SEATPFADVD…SEGFINEKEG (305 aa)) is the NB-ARC domain. An ATP-binding site is contributed by 183 to 190 (GMGGVGKT). LRR repeat units follow at residues 518–539 (TVRK…HECA), 540–561 (ALTT…FFRC), 564–586 (HLVV…ISEL), 588–610 (SLRY…WTLK), 611–633 (KLIH…SNLW), and 634–656 (NLRT…KELQ).

The protein belongs to the disease resistance NB-LRR family. As to quaternary structure, in uninfected plants, interacts with PBS1 through the coiled coil domain. Homodimer.

Its subcellular location is the cell membrane. Disease resistance (R) protein that specifically recognizes the avrPphB type III effector avirulence protein from Pseudomonas syringae. Also confers resistance against Hyaloperonospora parasitica (downy mildew). Resistance proteins guard the plant against pathogens that contain an appropriate avirulence protein via an indirect interaction with this avirulence protein. That triggers a defense system including the hypersensitive response, which restricts the pathogen growth. Requires PBS1 to trigger the defense reaction against avrPphB. In case of infection by Pseudomonas syringae, AvrPphB triggers RPS5-mediated defense mechanism via the cleavage of PBS1, suggesting that the cleavage of PBS1 could trigger an exchange of ADP for ATP, thereby activating RPS5. May function as a fine-tuned sensor of alterations in the structure of the effector target PBS1. This is Disease resistance protein RPS5 (RPS5) from Arabidopsis thaliana (Mouse-ear cress).